Consider the following 330-residue polypeptide: Probable L-asparaginase (330 aa).

In terms of domain architecture, Asparaginase/glutaminase spans 6–330 (PTIALLATGG…EKIQEMFEEY (325 aa)). Threonine 16 (O-isoaspartyl threonine intermediate) is an active-site residue. Residues serine 62 and 95 to 96 (TD) each bind substrate.

Belongs to the asparaginase 1 family.

The protein localises to the cytoplasm. The catalysed reaction is L-asparagine + H2O = L-aspartate + NH4(+). This is Probable L-asparaginase (ansA) from Helicobacter pylori (strain ATCC 700392 / 26695) (Campylobacter pylori).